The sequence spans 238 residues: Cysteine-rich venom protein pseudechetoxin (238 aa).

A signal peptide spans 1–19 (MIAFIVLLSLAAVLQQSSG). The propeptide occupies 20–27 (TADFASES). Residues 38 to 164 (VDKHNALRRS…SSKYLYVCQY (127 aa)) form the SCP domain. Residues threonine 51 and serine 106 each contribute to the Zn(2+) site. 8 disulfide bridges follow: cysteine 75–cysteine 153, cysteine 92–cysteine 165, cysteine 148–cysteine 162, cysteine 184–cysteine 191, cysteine 187–cysteine 196, cysteine 200–cysteine 233, cysteine 209–cysteine 227, and cysteine 218–cysteine 231. The 34-residue stretch at 200 to 233 (CKRNNDFSNCKSLAKKSKCQTEWIKKKCPASCFC) folds into the ShKT domain.

Expressed by the venom gland.

The protein resides in the secreted. Its function is as follows. Blocks olfactory (CNGA2) and retinal (CNGA1) cyclic nucleotide-gated (CNG) ion channel currents. Does not inhibit retinal (CNGA3) currents. It forms high-affinity contacts with the pore turret region and most likely inhibits CNG channel current by blocking the external entrance to the transmembrane pore. Is really more potent that Pseudecin. Does not affect neither depolarization- nor caffeine-induced contraction arterial smooth muscle. The sequence is that of Cysteine-rich venom protein pseudechetoxin from Pseudechis australis (Mulga snake).